The sequence spans 382 residues: uncharacterized protein (382 aa).

The next 12 membrane-spanning stretches (helical) occupy residues 14 to 34 (GLLLLTLAIAVLNTLVPLWLA), 45 to 65 (VVSSSYFTGNLVGTLLTGYVI), 79 to 99 (FIFAAGCAGLGLMIGFWSWLA), 102 to 122 (FVAGVGCAMIWVVVESALMCS), 131 to 151 (LLAAYMMVYYVGTFLGQLLVS), 157 to 177 (LMSVLPWVTGLTLAGILPLLF), 204 to 224 (LGVNGCIISGIVLGSLYGLMP), 235 to 255 (ASIGFWMAVLVSAGILGQWPI), 270 to 290 (VQVFVVILGSIAMLSQAAMAP), 291 to 311 (ALFILGAAGFTLYPVAMAWAC), 325 to 345 (ALLLSYTVGSLLGPSFSAMLM), and 348 to 368 (FSDNLLFIMIASVSFIYLLML).

This sequence belongs to the major facilitator superfamily. YcaD (TC 2.A.1.26) family.

The protein localises to the cell inner membrane. This is an uncharacterized protein from Shigella flexneri serotype 5b (strain 8401).